A 105-amino-acid chain; its full sequence is Thioredoxin (105 aa).

One can recognise a Thioredoxin domain in the interval 2–105; that stretch reads VKQIESKYAF…KLEATINELI (104 aa). N6-acetyllysine is present on Lys-3. Lys-8 carries the post-translational modification N6-succinyllysine. Active-site nucleophile residues include Cys-32 and Cys-35. An intrachain disulfide couples Cys-32 to Cys-35. Lys-39 carries the post-translational modification N6-acetyllysine. S-nitrosocysteine is present on residues Cys-62 and Cys-69. An S-nitrosocysteine; alternate modification is found at Cys-73. Lys-94 bears the N6-acetyllysine; alternate mark. Residue Lys-94 is modified to N6-succinyllysine; alternate.

It belongs to the thioredoxin family. Homodimer; disulfide-linked. Interacts with TXNIP through the redox-active site. Interacts with MAP3K5 and CASP3. Interacts with APEX1; the interaction stimulates the FOS/JUN AP-1 DNA-binding activity in a redox-dependent manner. In the fully reduced protein, both Cys-69 and Cys-73 are nitrosylated in response to nitric oxide (NO). When two disulfide bonds are present in the protein, only Cys-73 is nitrosylated. Cys-73 can serve as donor for nitrosylation of target proteins. Erythrocytes.

Its subcellular location is the nucleus. It localises to the cytoplasm. The protein localises to the secreted. Participates in various redox reactions through the reversible oxidation of its active center dithiol to a disulfide and catalyzes dithiol-disulfide exchange reactions. Plays a role in the reversible S-nitrosylation of cysteine residues in target proteins, and thereby contributes to the response to intracellular nitric oxide. Nitrosylates the active site Cys of CASP3 in response to nitric oxide (NO), and thereby inhibits caspase-3 activity. Induces the FOS/JUN AP-1 DNA binding activity in ionizing radiation (IR) cells through its oxidation/reduction status and stimulates AP-1 transcriptional activity. The protein is Thioredoxin (TXN) of Sus scrofa (Pig).